The following is a 129-amino-acid chain: Dynein 14 kDa light chain, flagellar outer arm (129 aa).

Residues 2 to 109 (AFITEIANEA…LNRIVTELSG (108 aa)) form the Thioredoxin domain. Residues cysteine 34 and cysteine 37 are joined by a disulfide bond. The disordered stretch occupies residues 107–129 (LSGKNPPPAAPAAAPAAPAAEAS). Low complexity predominate over residues 117 to 129 (PAAAPAAPAAEAS).

As to quaternary structure, consists of at least 3 heavy chains (alpha, beta and gamma), 2 intermediate chains and 8 light chains.

The protein resides in the cell projection. It localises to the cilium. The protein localises to the flagellum. Its subcellular location is the cytoplasm. It is found in the cytoskeleton. The protein resides in the flagellum axoneme. Functionally, may be involved in regulating the redox state of functionally important thiol groups within dynein. In Chlamydomonas reinhardtii (Chlamydomonas smithii), this protein is Dynein 14 kDa light chain, flagellar outer arm.